Consider the following 524-residue polypeptide: Probable lipid II flippase MurJ (524 aa).

A run of 13 helical transmembrane segments spans residues 44–64 (IFGA…PNLL), 103–123 (LLTL…PWVI), 146–166 (ITFP…ILNT), 172–192 (IPAF…LFAA), 195–215 (FNPP…LQLV), 250–270 (ILGV…ASFL), 284–304 (LMEF…LPSL), 322–342 (WGLR…GILA), 367–387 (LIAY…APGF), 396–416 (PVKI…AFIG), 420–440 (HAGL…LLYW), 456–476 (WFLM…FGVL), and 494–514 (LMAV…VLGF).

The protein belongs to the MurJ/MviN family.

It localises to the cell inner membrane. It participates in cell wall biogenesis; peptidoglycan biosynthesis. Involved in peptidoglycan biosynthesis. Transports lipid-linked peptidoglycan precursors from the inner to the outer leaflet of the cytoplasmic membrane. This chain is Probable lipid II flippase MurJ, found in Salmonella typhimurium (strain LT2 / SGSC1412 / ATCC 700720).